The following is a 789-amino-acid chain: Endonuclease MutS2 (789 aa).

ATP is bound at residue 334–341 (GPNTGGKT). A disordered region spans residues 690–714 (PEKDIQQSGTGKIMKSKTGDTKSEV). A Smr domain is found at 714-789 (VDVRGKNLEE…GMGVTIVELK (76 aa)).

Belongs to the DNA mismatch repair MutS family. MutS2 subfamily. As to quaternary structure, homodimer. Binds to stalled ribosomes, contacting rRNA.

Endonuclease that is involved in the suppression of homologous recombination and thus may have a key role in the control of bacterial genetic diversity. In terms of biological role, acts as a ribosome collision sensor, splitting the ribosome into its 2 subunits. Detects stalled/collided 70S ribosomes which it binds and splits by an ATP-hydrolysis driven conformational change. Acts upstream of the ribosome quality control system (RQC), a ribosome-associated complex that mediates the extraction of incompletely synthesized nascent chains from stalled ribosomes and their subsequent degradation. Probably generates substrates for RQC. The chain is Endonuclease MutS2 from Alkaliphilus metalliredigens (strain QYMF).